The following is a 753-amino-acid chain: Rho guanine nucleotide exchange factor gef1 (753 aa).

3 disordered regions span residues 52 to 150, 175 to 194, and 200 to 245; these read SNSY…DRNR, TLRKIHTNTSSNGTSRRVSG, and AQNS…ASLL. 4 stretches are compositionally biased toward polar residues: residues 94 to 105, 114 to 141, 181 to 191, and 200 to 220; these read DPQTPNTPPVSS, GSFNLPNSNMSHSLNGDSTASNSSTLTP, TNTSSNGTSRR, and AQNSSETSSNRTSAYLPGSST. Residues 230 to 245 are compositionally biased toward low complexity; it reads TLASMPSSHSSTASLL. The DH domain occupies 311 to 507; that stretch reads KRANLIKELV…QELISGINQK (197 aa).

Interacts with cdc42.

The protein localises to the cytoplasm. Functionally, has a role in the control of cell polarity and cytokinesis. Involved in bipolar growth, via modulation of cdc42-shk1-orb6 signaling, and septum formation. Stimulates guanine nucleotide exchange of cdc42. This is Rho guanine nucleotide exchange factor gef1 (gef1) from Schizosaccharomyces pombe (strain 972 / ATCC 24843) (Fission yeast).